The following is a 426-amino-acid chain: UPF0761 membrane protein Nmul_A0452 (426 aa).

The next 6 membrane-spanning stretches (helical) occupy residues 48–68 (LLSL…FPAF), 106–126 (LTAI…LTID), 145–165 (LLIY…SLSL), 187–207 (LLRL…YLIV), 217–237 (AIAG…GFAF), and 255–275 (IPIF…GAVI).

It belongs to the UPF0761 family.

The protein resides in the cell inner membrane. This Nitrosospira multiformis (strain ATCC 25196 / NCIMB 11849 / C 71) protein is UPF0761 membrane protein Nmul_A0452.